We begin with the raw amino-acid sequence, 377 residues long: Lipoyl synthase, mitochondrial (377 aa).

7 residues coordinate [4Fe-4S] cluster: cysteine 98, cysteine 103, cysteine 109, cysteine 128, cysteine 132, cysteine 135, and serine 343. One can recognise a Radical SAM core domain in the interval 113–332 (KKSEATATIM…RDTALDMGFL (220 aa)).

The protein belongs to the radical SAM superfamily. Lipoyl synthase family. [4Fe-4S] cluster is required as a cofactor.

Its subcellular location is the mitochondrion. The catalysed reaction is [[Fe-S] cluster scaffold protein carrying a second [4Fe-4S](2+) cluster] + N(6)-octanoyl-L-lysyl-[protein] + 2 oxidized [2Fe-2S]-[ferredoxin] + 2 S-adenosyl-L-methionine + 4 H(+) = [[Fe-S] cluster scaffold protein] + N(6)-[(R)-dihydrolipoyl]-L-lysyl-[protein] + 4 Fe(3+) + 2 hydrogen sulfide + 2 5'-deoxyadenosine + 2 L-methionine + 2 reduced [2Fe-2S]-[ferredoxin]. The protein operates within protein modification; protein lipoylation via endogenous pathway; protein N(6)-(lipoyl)lysine from octanoyl-[acyl-carrier-protein]: step 2/2. Catalyzes the radical-mediated insertion of two sulfur atoms into the C-6 and C-8 positions of the octanoyl moiety bound to the lipoyl domains of lipoate-dependent enzymes, thereby converting the octanoylated domains into lipoylated derivatives. The sequence is that of Lipoyl synthase, mitochondrial from Candida tropicalis (strain ATCC MYA-3404 / T1) (Yeast).